The sequence spans 287 residues: Probable endonuclease 4 (287 aa).

Residues His69, His109, Glu144, Asp178, His181, His215, Asp228, His230, and Glu260 each contribute to the Zn(2+) site.

It belongs to the AP endonuclease 2 family. Requires Zn(2+) as cofactor.

It catalyses the reaction Endonucleolytic cleavage to 5'-phosphooligonucleotide end-products.. Its function is as follows. Endonuclease IV plays a role in DNA repair. It cleaves phosphodiester bonds at apurinic or apyrimidinic (AP) sites, generating a 3'-hydroxyl group and a 5'-terminal sugar phosphate. This is Probable endonuclease 4 from Thermotoga sp. (strain RQ2).